The chain runs to 379 residues: MLCLGLMSGTSADGVDAVLARFQGAPDRPEWQLLSHHHSPYPAALRDELVRIGQGEARPAAALLDLAEAVTEHQALAARGADPDQRASLIGCHGQTLWHRPPSSDKRGASWQLLLAPLLAQLLARPVVHDFRATDLALGGQGAPLVPRADAALIGPGDGWRGVLNLGGIANLTLIPPRWGPQKQESVLGWDCGPANSLIDLAMEQFSDGQQLFDRDGAMAAAGRCDDGMIQRWLREPYFQLSPPKSTGRECFGQEDLRRRLQELESVERADAVATLTGFTAAVVAQDLDRLRADRSIHLLELLVAGGGCRNPVLMSELQRRCRGLAVRASDQIGLAAEAREALVFALLAWWHHRGHPGNAPAITGATREACLGVRVAPA.

ATP is bound at residue 9 to 16 (GTSADGVD).

The protein belongs to the anhydro-N-acetylmuramic acid kinase family.

It carries out the reaction 1,6-anhydro-N-acetyl-beta-muramate + ATP + H2O = N-acetyl-D-muramate 6-phosphate + ADP + H(+). It participates in amino-sugar metabolism; 1,6-anhydro-N-acetylmuramate degradation. The protein operates within cell wall biogenesis; peptidoglycan recycling. In terms of biological role, catalyzes the specific phosphorylation of 1,6-anhydro-N-acetylmuramic acid (anhMurNAc) with the simultaneous cleavage of the 1,6-anhydro ring, generating MurNAc-6-P. Is required for the utilization of anhMurNAc either imported from the medium or derived from its own cell wall murein, and thus plays a role in cell wall recycling. This Parasynechococcus marenigrum (strain WH8102) protein is Anhydro-N-acetylmuramic acid kinase.